We begin with the raw amino-acid sequence, 899 residues long: MSEVTVKALAEEVGTPIDRLLQQFSDAGISKKAEDNVSQTEKQSLLSHLQKEHGGESTDGTPTRLTLQRKTHSTLSVAGTGGKSKSVQVEVRKKRTFVKRSALEEEQRAADNAKQEAEETAQREAENVAKRKEDVRLAEEKAKRDEENKAKRNTEDTVKREATDKRKAEEKAKRTVAVKQAKSETELLQLRREEEAKRKAEEDSQRQLEEARKMAETNEKNWSATEQNVTANMEKSDYHVTTSTHARAAEDEQDRKEETTGTRRKKKPAAKKADDRKGRGGRNQRNQRGGRGKQKPQVNAPTSMQQGFDKTATVAKSDVVIGETIVVSELANKMAVKATEVIKAMMKMGAMVTINQVIDQETAALVAEEMGHKVIFRKENELEEALMSDRGETQAVESRAPVVTIMGHVDHGKTSTLDFIRKAHVASGEAGGITQHIGAYHVEIGNGMITFLDTPGHAAFTAMRARGAQATDIVVLVVAADDGVMPQTVEAIQHAKAAGVPLIVAVNKIDKDGANPDNVKNELAQYDIIPEEWGGENIFVHISAKQGTNIDGLLEAILLQSEILELTAVKEGMASGVVIESRIDKGRGPVATVLVQSGTLRKGDIVLCGLEHGRVRAMRDENGKDIESAGPSIPVEILGLSGVPAAGDEATVVRDDRKAREVALYRQGKFRDVKLARQQKSKLENMFSHMEAGEVAECNVVLKADVQGSIEAIADSLMKLSTDEVKVKVVGSGVGGITETDAVLAAASNAIILGFNVRADVPARRMIENENLDLRYYSVIYQLIDEVKAAMGGMLAPEFRQEIIGLAEVRDVFKSPKIGAIAGCMVTEGTIKRNNPIRVLRDNVVIYEGELESLRRFKDDTNEVKNGYECGIGVKNYNDVRVGDQIEVFEIIEIQRTLD.

Disordered regions lie at residues 31–227 (KKAE…ATEQ) and 240–310 (VTTS…GFDK). Polar residues-rich tracts occupy residues 36 to 47 (NVSQTEKQSLLS) and 73 to 87 (STLSVAGTGGKSKSV). Basic and acidic residues-rich tracts occupy residues 101–173 (SALE…EKAK), 181–219 (AKSETELLQLRREEEAKRKAEEDSQRQLEEARKMAETNE), and 247–261 (RAAEDEQDRKEETTG). Polar residues predominate over residues 296–308 (PQVNAPTSMQQGF). The region spanning 398 to 565 (SRAPVVTIMG…AILLQSEILE (168 aa)) is the tr-type G domain. Residues 407–414 (GHVDHGKT) form a G1 region. 407–414 (GHVDHGKT) lines the GTP pocket. Residues 432-436 (GITQH) are G2. The interval 453 to 456 (DTPG) is G3. GTP contacts are provided by residues 453-457 (DTPGH) and 507-510 (NKID). Positions 507-510 (NKID) are G4. Positions 543 to 545 (SAK) are G5.

The protein belongs to the TRAFAC class translation factor GTPase superfamily. Classic translation factor GTPase family. IF-2 subfamily.

The protein localises to the cytoplasm. Functionally, one of the essential components for the initiation of protein synthesis. Protects formylmethionyl-tRNA from spontaneous hydrolysis and promotes its binding to the 30S ribosomal subunits. Also involved in the hydrolysis of GTP during the formation of the 70S ribosomal complex. The chain is Translation initiation factor IF-2 from Photobacterium profundum (strain SS9).